Reading from the N-terminus, the 377-residue chain is Histidine protein methyltransferase 1 (377 aa).

The protein belongs to the methyltransferase superfamily. METTL18 family.

The protein localises to the cytoplasm. The protein resides in the nucleus. The catalysed reaction is L-histidyl-[protein] + S-adenosyl-L-methionine = N(tele)-methyl-L-histidyl-[protein] + S-adenosyl-L-homocysteine + H(+). Protein-histidine N-methyltransferase that mediates methylation of RPL3 at 'His-243'. Methylates ribosome-associated RPL3, but not free RPL3, thereby regulating 60S subunit assembly. In addition to RPL3, mediates His methylation of other proteins. This Saccharomyces cerevisiae (strain ATCC 204508 / S288c) (Baker's yeast) protein is Histidine protein methyltransferase 1.